The sequence spans 359 residues: Aminomethyltransferase (359 aa).

It belongs to the GcvT family. The glycine cleavage system is composed of four proteins: P, T, L and H.

It carries out the reaction N(6)-[(R)-S(8)-aminomethyldihydrolipoyl]-L-lysyl-[protein] + (6S)-5,6,7,8-tetrahydrofolate = N(6)-[(R)-dihydrolipoyl]-L-lysyl-[protein] + (6R)-5,10-methylene-5,6,7,8-tetrahydrofolate + NH4(+). In terms of biological role, the glycine cleavage system catalyzes the degradation of glycine. The protein is Aminomethyltransferase of Synechococcus sp. (strain RCC307).